Here is a 245-residue protein sequence, read N- to C-terminus: 1-(5-phosphoribosyl)-5-[(5-phosphoribosylamino)methylideneamino] imidazole-4-carboxamide isomerase (245 aa).

D7 functions as the Proton acceptor in the catalytic mechanism. Catalysis depends on D129, which acts as the Proton donor.

Belongs to the HisA/HisF family.

Its subcellular location is the cytoplasm. The catalysed reaction is 1-(5-phospho-beta-D-ribosyl)-5-[(5-phospho-beta-D-ribosylamino)methylideneamino]imidazole-4-carboxamide = 5-[(5-phospho-1-deoxy-D-ribulos-1-ylimino)methylamino]-1-(5-phospho-beta-D-ribosyl)imidazole-4-carboxamide. The protein operates within amino-acid biosynthesis; L-histidine biosynthesis; L-histidine from 5-phospho-alpha-D-ribose 1-diphosphate: step 4/9. The polypeptide is 1-(5-phosphoribosyl)-5-[(5-phosphoribosylamino)methylideneamino] imidazole-4-carboxamide isomerase (Shewanella baltica (strain OS155 / ATCC BAA-1091)).